The sequence spans 156 residues: uncharacterized protein (156 aa).

To L.lactis TrpF C-terminal region.

This is an uncharacterized protein from Bacillus subtilis (strain 168).